Here is a 595-residue protein sequence, read N- to C-terminus: Merlin (595 aa).

A Phosphoserine modification is found at Ser-13. The FERM domain maps to 22–311 (FTVRIVTMDA…GNHDLFMRRR (290 aa)). Ser-518 bears the Phosphoserine; by PAK mark.

As to quaternary structure, interacts with NHERF1, HGS and AGAP2. Interacts with SGSM3. Interacts (via FERM domain) with MPP1. Interacts with LAYN and WWC1. Interacts with the CUL4A-RBX1-DDB1-VprBP/DCAF1 E3 ubiquitin-protein ligase complex. The unphosphorylated form interacts (via FERM domain) with VPRBP/DCAF1. Interacts (via FERM domain) with NOP53; the interaction is direct. Interacts with SCHIP1; the interaction is direct. In terms of processing, phosphorylation of Ser-518 inhibits nuclear localization by disrupting the intramolecular association of the FERM domain with the C-terminal tail. Ubiquitinated by the CUL4A-RBX1-DDB1-DCAF1/VprBP E3 ubiquitin-protein ligase complex for ubiquitination and subsequent proteasome-dependent degradation. Post-translationally, phosphorylation of Ser-518 inhibits nuclear localization by disrupting the intramolecular association of the FERM domain with the C-terminal tail. The dephosphorylation of Ser-518 favors the interaction with NOP53.

It is found in the cell membrane. Its subcellular location is the cell projection. It localises to the cytoplasm. The protein localises to the cytoskeleton. The protein resides in the nucleus. Probable regulator of the Hippo/SWH (Sav/Wts/Hpo) signaling pathway, a signaling pathway that plays a pivotal role in tumor suppression by restricting proliferation and promoting apoptosis. Along with WWC1 can synergistically induce the phosphorylation of LATS1 and LATS2 and can probably function in the regulation of the Hippo/SWH (Sav/Wts/Hpo) signaling pathway. May act as a membrane stabilizing protein. May inhibit PI3 kinase by binding to AGAP2 and impairing its stimulating activity. Suppresses cell proliferation and tumorigenesis by inhibiting the CUL4A-RBX1-DDB1-VprBP/DCAF1 E3 ubiquitin-protein ligase complex. This Papio anubis (Olive baboon) protein is Merlin (NF2).